The sequence spans 1088 residues: DNA mismatch repair protein MutS (1088 aa).

Residues 498–579 are disordered; the sequence is PLDGITPPDD…SFEMPSLHGH (82 aa). Residues 537-546 are compositionally biased toward acidic residues; the sequence is DLFDEEEEQE. 816-823 lines the ATP pocket; it reads GPNMSGKS. The segment at 1000–1048 is disordered; sequence LERRAPRSTPQPAPERTEERPAAGRPTARSHSAARGDPPRAPDGQLSLF.

It belongs to the DNA mismatch repair MutS family.

This protein is involved in the repair of mismatches in DNA. It is possible that it carries out the mismatch recognition step. This protein has a weak ATPase activity. This chain is DNA mismatch repair protein MutS, found in Roseiflexus castenholzii (strain DSM 13941 / HLO8).